Here is a 223-residue protein sequence, read N- to C-terminus: Ribose-5-phosphate isomerase A (223 aa).

Substrate-binding positions include 32 to 35, 85 to 88, and 98 to 101; these read TGST, DGAD, and KGGG. Glutamate 107 acts as the Proton acceptor in catalysis. Lysine 125 serves as a coordination point for substrate.

The protein belongs to the ribose 5-phosphate isomerase family. In terms of assembly, homodimer.

The catalysed reaction is aldehydo-D-ribose 5-phosphate = D-ribulose 5-phosphate. Its pathway is carbohydrate degradation; pentose phosphate pathway; D-ribose 5-phosphate from D-ribulose 5-phosphate (non-oxidative stage): step 1/1. Functionally, catalyzes the reversible conversion of ribose-5-phosphate to ribulose 5-phosphate. This Pseudomonas aeruginosa (strain LESB58) protein is Ribose-5-phosphate isomerase A.